Here is a 1571-residue protein sequence, read N- to C-terminus: Paternally-expressed gene 3 protein (1571 aa).

Disordered regions lie at residues 1–120 and 137–241; these read MYHH…NPIQ and AEDD…QERG. Composition is skewed to basic and acidic residues over residues 35–56, 80–99, 169–186, 193–215, and 223–241; these read GSER…DRWP, FGLD…RSQD, PEAK…DESS, KFIK…ERPP, and DNWK…QERG. Residues 199–265 are 10 X 5 AA repeat of P-H-X-X-E; it reads ARNPKSGRAR…DLASRSRALE (67 aa). The segment at 199–265 is 3 X 5 AA repeat of P-H-D-D-K; that stretch reads ARNPKSGRAR…DLASRSRALE (67 aa). 4 consecutive C2H2-type zinc fingers follow at residues 325 to 347, 378 to 400, 436 to 458, and 520 to 542; these read YVCD…QIMH, FECK…RQIH, and YECK…QKIH. Residues 456–495 form a disordered region; it reads KIHGRGNSDDRDNERERERDRLRARAREQRERERERERER. Disordered regions lie at residues 585–649, 672–713, and 764–820; these read ALMG…LKFP, EAQK…TYEG, and REDA…AKKK. The segment covering 592 to 614 has biased composition (basic and acidic residues); the sequence is SSEHQKNRSRRNFFEGRGFEKPF. Composition is skewed to polar residues over residues 770 to 781 and 799 to 808; these read GSSSSNYHTPNV and DVTFSVPSSS. Positions 809-820 are enriched in basic and acidic residues; that stretch reads VREHQKARAKKK. The C2H2-type 5 zinc-finger motif lies at 850–872; the sequence is FECQECGEAFARRSELIEHQKIH. The tract at residues 937–1070 is disordered; it reads FNAEEPHDKE…ESHGQEKVED (134 aa). Basic and acidic residues predominate over residues 940–1070; that stretch reads EEPHDKETHG…ESHGQEKVED (131 aa). 13 repeat units span residues 942–946, 967–971, 987–991, 992–996, 997–1001, 1002–1006, 1007–1011, 1012–1016, 1017–1021, 1022–1026, 1027–1031, 1032–1036, and 1047–1051. 4 consecutive C2H2-type zinc fingers follow at residues 1091-1113, 1147-1169, 1209-1231, and 1266-1289; these read YECQ…QDTH, YECP…QRVH, IRCR…MRQH, and FECT…TKVH. Residues 1317–1339 form a C2H2-type 10; degenerate zinc finger; that stretch reads YECKDCGQSFLDDTVIAERMVFH. Residues 1373-1487 form a disordered region; it reads NAEAAEPEVE…DQEIEVEEPY (115 aa). Acidic residues-rich tracts occupy residues 1377 to 1397, 1405 to 1418, and 1431 to 1485; these read AEPE…EVEA, EGPD…DGEA, and DADE…EVEE. C2H2-type zinc fingers lie at residues 1488-1510 and 1547-1569; these read YNCH…LKSH and FKCD…QNSH.

It belongs to the krueppel C2H2-type zinc-finger protein family. As to quaternary structure, homodimer. Interacts with SIAH1A and SIAH2. Interacts with TRAF2. Brain, glial cells, neurons, skeletal muscle, uterus and placenta. In the placenta it is found in all trophoblast cells.

The protein resides in the nucleus. Its subcellular location is the cytoplasm. Induces apoptosis in cooperation with SIAH1A. Acts as a mediator between p53/TP53 and BAX in a neuronal death pathway that is activated by DNA damage. Acts synergistically with TRAF2 and inhibits TNF induced apoptosis through activation of NF-kappa-B. Plays a role in regulating maternal behavior and offspring growth. This chain is Paternally-expressed gene 3 protein (Peg3), found in Mus musculus (Mouse).